A 284-amino-acid polypeptide reads, in one-letter code: Bifunctional protein FolD (284 aa).

NADP(+) is bound by residues 166-168 (GAS) and Ile232.

The protein belongs to the tetrahydrofolate dehydrogenase/cyclohydrolase family. In terms of assembly, homodimer.

The enzyme catalyses (6R)-5,10-methylene-5,6,7,8-tetrahydrofolate + NADP(+) = (6R)-5,10-methenyltetrahydrofolate + NADPH. The catalysed reaction is (6R)-5,10-methenyltetrahydrofolate + H2O = (6R)-10-formyltetrahydrofolate + H(+). Its pathway is one-carbon metabolism; tetrahydrofolate interconversion. In terms of biological role, catalyzes the oxidation of 5,10-methylenetetrahydrofolate to 5,10-methenyltetrahydrofolate and then the hydrolysis of 5,10-methenyltetrahydrofolate to 10-formyltetrahydrofolate. The protein is Bifunctional protein FolD of Pseudomonas fluorescens (strain ATCC BAA-477 / NRRL B-23932 / Pf-5).